The primary structure comprises 994 residues: Tyrosine-protein kinase Mer (994 aa).

The first 18 residues, 1-18 (MVLAPLLLGLLLLPALWS), serve as a signal peptide directing secretion. The Extracellular portion of the chain corresponds to 19–497 (GGTAEKWEET…TPAPGNTDSM (479 aa)). The disordered stretch occupies residues 44–78 (VNHRPFSAPHSSRDQLPPPQTGRSHPAHTAAPQVT). 2 Ig-like C2-type domains span residues 75 to 181 (PQVT…EIVS) and 192 to 268 (PYFI…LTVS). N-linked (GlcNAc...) asparagine glycosylation is found at asparagine 91, asparagine 108, asparagine 165, asparagine 202, asparagine 210, asparagine 229, asparagine 289, asparagine 311, asparagine 324, asparagine 331, asparagine 349, asparagine 384, asparagine 390, asparagine 437, and asparagine 449. The cysteines at positions 109 and 170 are disulfide-linked. An intrachain disulfide couples cysteine 213 to cysteine 257. Fibronectin type-III domains are found at residues 281–376 (PPTE…TTEG) and 381–478 (APLN…IPEH). The helical transmembrane segment at 498-518 (FIILGCFCGFILIGLILCISL) threads the bilayer. The Cytoplasmic portion of the chain corresponds to 519 to 994 (ALRRRVQETK…DSLEDSEVLM (476 aa)). Phosphoserine is present on serine 538. Positions 582–852 (LVLGKVLGEG…SVLRLQLEKL (271 aa)) constitute a Protein kinase domain. ATP is bound by residues 588–596 (LGEGEFGSV) and lysine 610. Aspartate 718 functions as the Proton acceptor in the catalytic mechanism. Phosphotyrosine; by autocatalysis occurs at positions 744, 748, 749, and 867.

This sequence belongs to the protein kinase superfamily. Tyr protein kinase family. AXL/UFO subfamily. In terms of assembly, interacts (upon activation) with TNK2; stimulates TNK2 autophosphorylation. Interacts (via N-terminus) with extracellular ligands LGALS3, TUB, TULP1 and GAS6. Interacts with VAV1 in a phosphotyrosine-independent manner. Interacts with TIMD4; this interaction enhances TIMD4-mediated efferocytosis. In terms of processing, autophosphorylated on Tyr-744, Tyr-748 and Tyr-749 in the activation loop allowing full activity. Autophosphorylated on Tyr-867 leading to recruitment of downstream partners of the signaling cascade such as PLCG2. In terms of tissue distribution, expressed predominantly in the hematopoietic lineages: macrophages, NK cells, NKT cells, dendritic cells and platelets.

It localises to the cell membrane. The enzyme catalyses L-tyrosyl-[protein] + ATP = O-phospho-L-tyrosyl-[protein] + ADP + H(+). In terms of biological role, receptor tyrosine kinase that transduces signals from the extracellular matrix into the cytoplasm by binding to several ligands including LGALS3, TUB, TULP1 or GAS6. Regulates many physiological processes including cell survival, migration, differentiation, and phagocytosis of apoptotic cells (efferocytosis). Ligand binding at the cell surface induces autophosphorylation of MERTK on its intracellular domain that provides docking sites for downstream signaling molecules. Following activation by ligand, interacts with GRB2 or PLCG2 and induces phosphorylation of MAPK1, MAPK2, FAK/PTK2 or RAC1. MERTK signaling plays a role in various processes such as macrophage clearance of apoptotic cells, platelet aggregation, cytoskeleton reorganization and engulfment. Functions in the retinal pigment epithelium (RPE) as a regulator of rod outer segments fragments phagocytosis. Also plays an important role in inhibition of Toll-like receptors (TLRs)-mediated innate immune response by activating STAT1, which selectively induces production of suppressors of cytokine signaling SOCS1 and SOCS3. In Mus musculus (Mouse), this protein is Tyrosine-protein kinase Mer (Mertk).